The chain runs to 309 residues: Ornithine carbamoyltransferase (309 aa).

Residues 56–59 (STRT), Q83, R107, and 134–137 (HPCQ) each bind carbamoyl phosphate. L-ornithine contacts are provided by residues N165, D223, and 227–228 (SM). Carbamoyl phosphate-binding positions include 263-264 (CL) and R291.

Belongs to the aspartate/ornithine carbamoyltransferase superfamily. OTCase family.

The protein resides in the cytoplasm. It catalyses the reaction carbamoyl phosphate + L-ornithine = L-citrulline + phosphate + H(+). The protein operates within amino-acid biosynthesis; L-arginine biosynthesis; L-arginine from L-ornithine and carbamoyl phosphate: step 1/3. Functionally, reversibly catalyzes the transfer of the carbamoyl group from carbamoyl phosphate (CP) to the N(epsilon) atom of ornithine (ORN) to produce L-citrulline. The chain is Ornithine carbamoyltransferase from Burkholderia cenocepacia (strain HI2424).